The following is an 83-amino-acid chain: Three-finger toxin MALT0058C (83 aa).

The signal sequence occupies residues 1–21 (MKTLLLTLVVVTIVCLDFGHT). 4 disulfides stabilise this stretch: cysteine 24-cysteine 45, cysteine 38-cysteine 62, cysteine 64-cysteine 75, and cysteine 76-cysteine 81.

The protein belongs to the three-finger toxin family. Short-chain subfamily. Type I alpha-neurotoxin sub-subfamily. As to expression, expressed by the venom gland.

The protein localises to the secreted. Binds to muscle nicotinic acetylcholine receptor (nAChR) and inhibits acetylcholine from binding to the receptor, thereby impairing neuromuscular transmission. This is Three-finger toxin MALT0058C from Micrurus altirostris (Uruguayan coral snake).